The chain runs to 340 residues: UDP-3-O-(3-hydroxymyristoyl)glucosamine N-acyltransferase (340 aa).

The active-site Proton acceptor is H239.

It belongs to the transferase hexapeptide repeat family. LpxD subfamily. In terms of assembly, homotrimer.

It catalyses the reaction a UDP-3-O-[(3R)-3-hydroxyacyl]-alpha-D-glucosamine + a (3R)-hydroxyacyl-[ACP] = a UDP-2-N,3-O-bis[(3R)-3-hydroxyacyl]-alpha-D-glucosamine + holo-[ACP] + H(+). It carries out the reaction UDP-3-O-[(3R)-3-hydroxytetradecanoyl]-alpha-D-glucosamine + (3R)-hydroxytetradecanoyl-[ACP] = UDP-2-N,3-O-bis[(3R)-3-hydroxytetradecanoyl]-alpha-D-glucosamine + holo-[ACP] + H(+). Its pathway is glycolipid biosynthesis; lipid IV(A) biosynthesis; lipid IV(A) from (3R)-3-hydroxytetradecanoyl-[acyl-carrier-protein] and UDP-N-acetyl-alpha-D-glucosamine: step 3/6. Functionally, catalyzes the N-acylation of UDP-3-O-(hydroxytetradecanoyl)glucosamine using 3-hydroxytetradecanoyl-ACP as the acyl donor. Is involved in the biosynthesis of lipid A, a phosphorylated glycolipid that anchors the lipopolysaccharide to the outer membrane of the cell. The polypeptide is UDP-3-O-(3-hydroxymyristoyl)glucosamine N-acyltransferase (Sodalis glossinidius (strain morsitans)).